A 132-amino-acid polypeptide reads, in one-letter code: Glycine cleavage system H protein (132 aa).

The 83-residue stretch at T24–H106 folds into the Lipoyl-binding domain. K65 bears the N6-lipoyllysine mark.

Belongs to the GcvH family. As to quaternary structure, the glycine cleavage system is composed of four proteins: P, T, L and H. (R)-lipoate serves as cofactor.

In terms of biological role, the glycine cleavage system catalyzes the degradation of glycine. The H protein shuttles the methylamine group of glycine from the P protein to the T protein. This Mycobacterium leprae (strain Br4923) protein is Glycine cleavage system H protein.